Here is a 352-residue protein sequence, read N- to C-terminus: MIETDKLRAAAPERLISPQPADRQEDAVERALRPKRLAEYVGQAKIREQLEIFIHAAKKRSEALDHVLLFGPPGLGKTTLAHIVAAEMGVNLRQTSGPVLERAGDLAALLTNLEPHDVLFIDEIHRLSPVVEEILYPALEDFQIDIMIGEGPAARSVKLDLPPFTLVGATTRAGMLTNPLRDRFGIVSRLEFYTPDELGFIVSRSARLLNVEIDDDGALEIARRARGTPRIANRLLRRVRDYAEVKAGGHITRAVADAALRMLDVDSLGLDLMDRKMLSAMLEKFGGGPVGLDNLAAAIGESTDTIEDVIEPYLIQQGYLQRTPRGRMATHSIWQHFGLAPPRPGGTDLFGG.

Positions 1–26 are disordered; it reads MIETDKLRAAAPERLISPQPADRQED. The interval 4–193 is large ATPase domain (RuvB-L); the sequence is TDKLRAAAPE…FGIVSRLEFY (190 aa). ATP is bound by residues L32, R33, G74, K77, T78, T79, 140–142, R183, Y193, and R230; that span reads EDF. T78 is a Mg(2+) binding site. The segment at 194–264 is small ATPAse domain (RuvB-S); it reads TPDELGFIVS…VADAALRMLD (71 aa). Residues 267–352 form a head domain (RuvB-H) region; sequence SLGLDLMDRK…RPGGTDLFGG (86 aa). Positions 322 and 327 each coordinate DNA.

It belongs to the RuvB family. Homohexamer. Forms an RuvA(8)-RuvB(12)-Holliday junction (HJ) complex. HJ DNA is sandwiched between 2 RuvA tetramers; dsDNA enters through RuvA and exits via RuvB. An RuvB hexamer assembles on each DNA strand where it exits the tetramer. Each RuvB hexamer is contacted by two RuvA subunits (via domain III) on 2 adjacent RuvB subunits; this complex drives branch migration. In the full resolvosome a probable DNA-RuvA(4)-RuvB(12)-RuvC(2) complex forms which resolves the HJ.

It localises to the cytoplasm. It carries out the reaction ATP + H2O = ADP + phosphate + H(+). In terms of biological role, the RuvA-RuvB-RuvC complex processes Holliday junction (HJ) DNA during genetic recombination and DNA repair, while the RuvA-RuvB complex plays an important role in the rescue of blocked DNA replication forks via replication fork reversal (RFR). RuvA specifically binds to HJ cruciform DNA, conferring on it an open structure. The RuvB hexamer acts as an ATP-dependent pump, pulling dsDNA into and through the RuvAB complex. RuvB forms 2 homohexamers on either side of HJ DNA bound by 1 or 2 RuvA tetramers; 4 subunits per hexamer contact DNA at a time. Coordinated motions by a converter formed by DNA-disengaged RuvB subunits stimulates ATP hydrolysis and nucleotide exchange. Immobilization of the converter enables RuvB to convert the ATP-contained energy into a lever motion, pulling 2 nucleotides of DNA out of the RuvA tetramer per ATP hydrolyzed, thus driving DNA branch migration. The RuvB motors rotate together with the DNA substrate, which together with the progressing nucleotide cycle form the mechanistic basis for DNA recombination by continuous HJ branch migration. Branch migration allows RuvC to scan DNA until it finds its consensus sequence, where it cleaves and resolves cruciform DNA. The protein is Holliday junction branch migration complex subunit RuvB of Azoarcus sp. (strain BH72).